Here is a 189-residue protein sequence, read N- to C-terminus: Phosphoheptose isomerase (189 aa).

The SIS domain occupies 34-189 (VADTLKNGKK…CQAVDEAFRG (156 aa)). 49–51 (NGG) contacts substrate. 2 residues coordinate Zn(2+): H58 and E62. Residues E62, 91 to 92 (ND), 117 to 119 (STS), S122, and Q169 contribute to the substrate site. Positions 169 and 177 each coordinate Zn(2+).

This sequence belongs to the SIS family. GmhA subfamily. In terms of assembly, homotetramer. Zn(2+) is required as a cofactor.

The protein resides in the cytoplasm. It carries out the reaction 2 D-sedoheptulose 7-phosphate = D-glycero-alpha-D-manno-heptose 7-phosphate + D-glycero-beta-D-manno-heptose 7-phosphate. It participates in carbohydrate biosynthesis; D-glycero-D-manno-heptose 7-phosphate biosynthesis; D-glycero-alpha-D-manno-heptose 7-phosphate and D-glycero-beta-D-manno-heptose 7-phosphate from sedoheptulose 7-phosphate: step 1/1. In terms of biological role, catalyzes the isomerization of sedoheptulose 7-phosphate in D-glycero-D-manno-heptose 7-phosphate. The polypeptide is Phosphoheptose isomerase (Campylobacter concisus (strain 13826)).